A 103-amino-acid chain; its full sequence is Iron-sulfur cluster assembly protein CyaY (103 aa).

It belongs to the frataxin family.

Involved in iron-sulfur (Fe-S) cluster assembly. May act as a regulator of Fe-S biogenesis. The protein is Iron-sulfur cluster assembly protein CyaY of Rickettsia peacockii (strain Rustic).